Reading from the N-terminus, the 939-residue chain is Progesterone receptor (939 aa).

Over residues 1 to 11 the composition is skewed to basic and acidic residues; it reads MTERTGKDARA. Residues 1-174 are AF3; mediates transcriptional activation (in isoform B); the sequence is MTERTGKDAR…RSSQGAACPL (174 aa). The tract at residues 1–302 is disordered; that stretch reads MTERTGKDAR…AEQDAPAPGC (302 aa). The segment at 1-572 is modulating, Ala/Pro-rich; sequence MTERTGKDAR…YSFESLPQKI (572 aa). A Glycyl lysine isopeptide (Lys-Gly) (interchain with G-Cter in SUMO) cross-link involves residue lysine 7. Low complexity predominate over residues 15-26; sequence AGGAPSPAPAAE. A Phosphoserine modification is found at serine 20. The segment covering 27-36 has biased composition (basic and acidic residues); the sequence is PESRRRDGGR. The span at 49–67 shows a compositional bias: low complexity; sequence AAAAAAAAAAASAAPSAPS. The residue at position 141 (serine 141) is a Phosphoserine. Residues 175–314 form a mediates transcriptional transrepression (in isoform A) region; the sequence is MSRPEGKAGD…LATTMMDFIH (140 aa). A Nuclear localization signal motif is present at residues 193–197; it reads KGPPR. Position 200 is a phosphoserine (serine 200). Low complexity-rich tracts occupy residues 211 to 230 and 257 to 278; these read GAHA…AALG and PAAA…TAPV. Phosphoserine; by MAPK1 is present on serine 303. Residue serine 349 is modified to Phosphoserine; by MAPK. Lysine 392 is covalently cross-linked (Glycyl lysine isopeptide (Lys-Gly) (interchain with G-Cter in SUMO); alternate). A Glycyl lysine isopeptide (Lys-Gly) (interchain with G-Cter in ubiquitin); alternate cross-link involves residue lysine 392. Serine 404 bears the Phosphoserine; by CDK2 mark. Residues 463–552 form an AF1; mediates transcriptional activation region; it reads PALECVLYKA…VYQPYLNYLR (90 aa). Residue lysine 537 forms a Glycyl lysine isopeptide (Lys-Gly) (interchain with G-Cter in SUMO) linkage. 2 consecutive NR C4-type zinc fingers follow at residues 573 to 593 and 609 to 633; these read CLIC…CGSC and CAGR…LRKC. Residues 573–645 constitute a DNA-binding region (nuclear receptor); it reads CLICGDEASG…AGMVLGGRKF (73 aa). A Phosphoserine modification is found at serine 682. An NR LBD domain is found at 685 to 919; sequence QDIQLIPPLI…EFPEMMSEVI (235 aa). The tract at residues 693–939 is AF2; mediates transcriptional activation; it reads LINLLMSIEP…MVKPLLFHKK (247 aa).

Belongs to the nuclear hormone receptor family. NR3 subfamily. In terms of assembly, interacts with SMARD1 and UNC45A. Interacts with CUEDC2; the interaction promotes ubiquitination, decreases sumoylation, and represses transcriptional activity. Interacts with PIAS3; the interaction promotes sumoylation of PR in a hormone-dependent manner, inhibits DNA-binding, and alters nuclear export. Interacts with SP1; the interaction requires ligand-induced phosphorylation on Ser-349 by ERK1/2-MAPK. Interacts with PRMT2. Isoform A interacts with NCOR2. Isoform B (but not isoform A) interacts with NCOA2 and NCOA1. Isoform B (but not isoform A) interacts with KLF9. Interacts with GTF2B. In terms of processing, phosphorylated on multiple serine sites. Several of these sites are hormone-dependent. Phosphorylation on Ser-303 occurs preferentially on isoform B, is highly hormone-dependent and modulates ubiquitination and sumoylation on Lys-392. Phosphorylation on Ser-303 and Ser-349 also requires induction by hormone. Basal phosphorylation on Ser-200 and Ser-404 is increased in response to progesterone and can be phosphorylated in vitro by the CDK2-A1 complex. Increased levels of phosphorylation on Ser-404 also in the presence of EGF, heregulin, IGF, PMA and FBS. Phosphorylation at this site by CDK2 is ligand-independent, and increases nuclear translocation and transcriptional activity. Phosphorylation at Ser-303, but not at Ser-200, is impaired during the G(2)/M phase of the cell cycle. Phosphorylation on Ser-349 by ERK1/2 MAPK is required for interaction with SP1. Sumoylation is hormone-dependent and represses transcriptional activity. Sumoylation on all three sites is enhanced by PIAS3. Desumoylated by SENP1. Sumoylation on Lys-392, the main site of sumoylation, is repressed by ubiquitination on the same site, and modulated by phosphorylation at Ser-303. Post-translationally, ubiquitination is hormone-dependent and represses sumoylation on the same site. Promoted by MAPK-mediated phosphorylation on Ser-303. In terms of processing, palmitoylated by ZDHHC7 and ZDHHC21. Palmitoylation is required for plasma membrane targeting and for rapid intracellular signaling via ERK and AKT kinases and cAMP generation. Expressed in mammary gland and uterus.

It is found in the nucleus. The protein localises to the cytoplasm. Its function is as follows. The steroid hormones and their receptors are involved in the regulation of eukaryotic gene expression and affect cellular proliferation and differentiation in target tissues. Depending on the isoform, progesterone receptor functions as a transcriptional activator or repressor. In terms of biological role, ligand-dependent transdominant repressor of steroid hormone receptor transcriptional activity including repression of its isoform B, MR and ER. Transrepressional activity may involve recruitment of corepressor NCOR2. Functionally, transcriptional activator of several progesteron-dependent promoters in a variety of cell types. Involved in activation of SRC-dependent MAPK signaling on hormone stimulation. The polypeptide is Progesterone receptor (PGR) (Canis lupus familiaris (Dog)).